The primary structure comprises 680 residues: DNA ligase (680 aa).

Residues 44–48 (DHVYD), 93–94 (SM), and glutamate 125 contribute to the NAD(+) site. Lysine 127 serves as the catalytic N6-AMP-lysine intermediate. NAD(+) is bound by residues arginine 148, glutamate 182, lysine 298, and lysine 322. 4 residues coordinate Zn(2+): cysteine 416, cysteine 419, cysteine 434, and cysteine 439. In terms of domain architecture, BRCT spans 600-680 (NPDSEWNGRR…QFSQAMKEEQ (81 aa)).

The protein belongs to the NAD-dependent DNA ligase family. LigA subfamily. Requires Mg(2+) as cofactor. It depends on Mn(2+) as a cofactor.

It carries out the reaction NAD(+) + (deoxyribonucleotide)n-3'-hydroxyl + 5'-phospho-(deoxyribonucleotide)m = (deoxyribonucleotide)n+m + AMP + beta-nicotinamide D-nucleotide.. DNA ligase that catalyzes the formation of phosphodiester linkages between 5'-phosphoryl and 3'-hydroxyl groups in double-stranded DNA using NAD as a coenzyme and as the energy source for the reaction. It is essential for DNA replication and repair of damaged DNA. This chain is DNA ligase, found in Limosilactobacillus reuteri (strain DSM 20016) (Lactobacillus reuteri).